Reading from the N-terminus, the 483-residue chain is Xylulose kinase (483 aa).

Position 77 to 78 (77 to 78 (MH)) interacts with substrate. Aspartate 233 (proton acceptor) is an active-site residue.

This sequence belongs to the FGGY kinase family.

It catalyses the reaction D-xylulose + ATP = D-xylulose 5-phosphate + ADP + H(+). In terms of biological role, catalyzes the phosphorylation of D-xylulose to D-xylulose 5-phosphate. The polypeptide is Xylulose kinase (Klebsiella pneumoniae).